We begin with the raw amino-acid sequence, 871 residues long: DNA mismatch repair protein MutS (871 aa).

618-625 (GPNMSGKS) is a binding site for ATP.

It belongs to the DNA mismatch repair MutS family.

In terms of biological role, this protein is involved in the repair of mismatches in DNA. It is possible that it carries out the mismatch recognition step. This protein has a weak ATPase activity. This Christiangramia forsetii (strain DSM 17595 / CGMCC 1.15422 / KT0803) (Gramella forsetii) protein is DNA mismatch repair protein MutS.